We begin with the raw amino-acid sequence, 64 residues long: Large ribosomal subunit protein bL35c (64 aa).

This sequence belongs to the bacterial ribosomal protein bL35 family.

It is found in the plastid. Its subcellular location is the chloroplast. The sequence is that of Large ribosomal subunit protein bL35c from Thalassiosira pseudonana (Marine diatom).